We begin with the raw amino-acid sequence, 766 residues long: Pentatricopeptide repeat-containing protein At5g28460 (766 aa).

PPR repeat units lie at residues Thr-151–Asn-181, Asn-184–Phe-218, Asn-221–Pro-257, Asn-258–Leu-292, Glu-293–Pro-327, Asp-328–Lys-358, Asp-369–Pro-404, Asn-405–Pro-439, Asn-440–Gly-474, Asn-475–Pro-509, Asp-510–Leu-544, Asp-545–Pro-579, Asp-580–Pro-614, Thr-615–Pro-650, Asn-651–Pro-685, and Asn-686–Pro-720.

This sequence belongs to the PPR family. P subfamily.

The polypeptide is Pentatricopeptide repeat-containing protein At5g28460 (Arabidopsis thaliana (Mouse-ear cress)).